A 125-amino-acid polypeptide reads, in one-letter code: Small ribosomal subunit protein uS12c (125 aa).

The protein belongs to the universal ribosomal protein uS12 family. In terms of assembly, part of the 30S ribosomal subunit.

The protein localises to the plastid. The protein resides in the chloroplast. Its function is as follows. With S4 and S5 plays an important role in translational accuracy. Located at the interface of the 30S and 50S subunits. This chain is Small ribosomal subunit protein uS12c (rps12), found in Tupiella akineta (Green alga).